The following is a 404-amino-acid chain: Schlafen-like protein 1 (404 aa).

2 disordered regions span residues 1 to 31 and 139 to 170; these read MTPM…LPTE and GPLS…AWPT. Over residues 7–16 the composition is skewed to polar residues; it reads SVQTQVSEPF. Residues 152-165 show a composition bias toward low complexity; it reads GLSPGPNPGSGVPL. ATP is bound at residue 258–265; that stretch reads GVEDSGLV. A coiled-coil region spans residues 365-395; the sequence is RWLVELGKLEERVKVLTMEKEQLQQQLQQHG.

This sequence belongs to the Schlafen family. Subgroup I subfamily.

This Macaca fascicularis (Crab-eating macaque) protein is Schlafen-like protein 1 (SLFNL1).